The chain runs to 327 residues: GDP-mannose transporter (327 aa).

Residues 1-4 (MESS) lie on the Cytoplasmic side of the membrane. A helical membrane pass occupies residues 5–25 (LAAIANSGPISIFSYCVSSIL). The Lumenal segment spans residues 26–36 (MTVTNKYVLSG). Residues 37–57 (FSFNMNFLLLAVQSIVCIVTI) traverse the membrane as a helical segment. At 58–78 (GSLKSFGVITYRQFNKEEARK) the chain is on the cytoplasmic side. A helical membrane pass occupies residues 79 to 93 (WSPIAVLLVIMIYTS). Over 94-102 (SKALQYLSI) the chain is Lumenal. The chain crosses the membrane as a helical span at residues 103–125 (PVYTIFKNLTIILIAYGEVLWFG). Topologically, residues 126-131 (GKVTTM) are cytoplasmic. The chain crosses the membrane as a helical span at residues 132–149 (ALSSFLLMVFSSVVAWYG). Residues 150-163 (DEAVSGSGNESFIA) lie on the Lumenal side of the membrane. An N-linked (GlcNAc...) asparagine glycan is attached at Asn-158. Residues 164–184 (LYLGYFWMATNCFASAAFVLI) traverse the membrane as a helical segment. Residues 185-207 (MRKRIKLTNFKDFDTMYYNNLLS) lie on the Cytoplasmic side of the membrane. The helical transmembrane segment at 208–228 (IPILLASSIIFEDWSAENLAV) threads the bilayer. The Lumenal segment spans residues 229–238 (NFPSDNRTAT). N-linked (GlcNAc...) asparagine glycosylation occurs at Asn-234. A helical membrane pass occupies residues 239 to 259 (IAAMVLSGASSVGISYCSAWC). The Cytoplasmic portion of the chain corresponds to 260–266 (VRVTSST). A helical transmembrane segment spans residues 267–289 (TYSMVGALNKLPIALSGLVFFPA). Over 290-292 (AVN) the chain is Lumenal. Residues 293–312 (FWSVASIFVGFAAGLVYAVA) traverse the membrane as a helical segment. The Cytoplasmic segment spans residues 313–327 (KQRQQKENVSLPSSK).

This sequence belongs to the TPT transporter family. SLC35D subfamily. Homooligomer.

It is found in the golgi apparatus membrane. Its subcellular location is the cytoplasmic vesicle membrane. The protein localises to the endoplasmic reticulum membrane. In terms of biological role, involved in the import of GDP-mannose from the cytoplasm into the Golgi lumen. This Scheffersomyces stipitis (strain ATCC 58785 / CBS 6054 / NBRC 10063 / NRRL Y-11545) (Yeast) protein is GDP-mannose transporter (VRG4).